The chain runs to 235 residues: Uridylate kinase (235 aa).

10 to 11 (GS) contacts ATP. Residue Gly45 participates in UMP binding. Residues Gly46 and Arg50 each contribute to the ATP site. UMP-binding positions include Asp67 and 115–121 (VTPGQTT). ATP-binding residues include Thr141, Tyr147, and Asp150.

Belongs to the UMP kinase family. As to quaternary structure, homohexamer.

The protein resides in the cytoplasm. The enzyme catalyses UMP + ATP = UDP + ADP. It functions in the pathway pyrimidine metabolism; CTP biosynthesis via de novo pathway; UDP from UMP (UMPK route): step 1/1. Its activity is regulated as follows. Inhibited by UTP. Functionally, catalyzes the reversible phosphorylation of UMP to UDP. This Methanocorpusculum labreanum (strain ATCC 43576 / DSM 4855 / Z) protein is Uridylate kinase.